A 23-amino-acid polypeptide reads, in one-letter code: Malate dehydrogenase (23 aa).

N7 is a binding site for NAD(+). Position 23 (R23) interacts with substrate.

The protein belongs to the LDH/MDH superfamily. MDH type 1 family. In terms of assembly, homodimer.

It catalyses the reaction (S)-malate + NAD(+) = oxaloacetate + NADH + H(+). The protein is Malate dehydrogenase of Pseudotsuga menziesii (Douglas-fir).